Reading from the N-terminus, the 679-residue chain is DNA ligase (679 aa).

NAD(+) is bound by residues 43–47, 92–93, and Glu124; these read DYVYD and SM. Lys126 (N6-AMP-lysine intermediate) is an active-site residue. NAD(+) is bound by residues Arg147, Glu181, Lys297, and Lys321. Cys415, Cys418, Cys433, and Cys438 together coordinate Zn(2+). One can recognise a BRCT domain in the interval 599–679; that stretch reads TESAEWAGKR…RFDQAMKEEN (81 aa).

Belongs to the NAD-dependent DNA ligase family. LigA subfamily. Mg(2+) serves as cofactor. It depends on Mn(2+) as a cofactor.

The enzyme catalyses NAD(+) + (deoxyribonucleotide)n-3'-hydroxyl + 5'-phospho-(deoxyribonucleotide)m = (deoxyribonucleotide)n+m + AMP + beta-nicotinamide D-nucleotide.. Functionally, DNA ligase that catalyzes the formation of phosphodiester linkages between 5'-phosphoryl and 3'-hydroxyl groups in double-stranded DNA using NAD as a coenzyme and as the energy source for the reaction. It is essential for DNA replication and repair of damaged DNA. This is DNA ligase from Limosilactobacillus fermentum (strain NBRC 3956 / LMG 18251) (Lactobacillus fermentum).